The following is a 135-amino-acid chain: Protein PsiE homolog (135 aa).

4 helical membrane-spanning segments follow: residues 20–40 (VGLIALAAILVVFLIKETFHL), 54–74 (YMLIEGIVIYFLYFEFIALIV), 82–102 (HFPLRYFIYIGITAIIRLIIV), and 107–127 (PIDTLIYSGSILLLVVTLYLA).

Belongs to the PsiE family.

It is found in the cell inner membrane. This Yersinia enterocolitica serotype O:8 / biotype 1B (strain NCTC 13174 / 8081) protein is Protein PsiE homolog.